A 305-amino-acid chain; its full sequence is Mycothiol acetyltransferase (305 aa).

2 N-acetyltransferase domains span residues 10–153 (DRLD…LVVP) and 156–305 (ISLR…YARA). E38 contributes to the 1D-myo-inositol 2-(L-cysteinylamino)-2-deoxy-alpha-D-glucopyranoside binding site. 82-84 (LAV) provides a ligand contact to acetyl-CoA. 1D-myo-inositol 2-(L-cysteinylamino)-2-deoxy-alpha-D-glucopyranoside-binding residues include E183, K225, and E238. Acetyl-CoA is bound by residues 242–244 (VAI) and 249–255 (QGRGLGR). Y276 lines the 1D-myo-inositol 2-(L-cysteinylamino)-2-deoxy-alpha-D-glucopyranoside pocket. 281-286 (NESALH) is an acetyl-CoA binding site.

This sequence belongs to the acetyltransferase family. MshD subfamily. In terms of assembly, monomer.

It catalyses the reaction 1D-myo-inositol 2-(L-cysteinylamino)-2-deoxy-alpha-D-glucopyranoside + acetyl-CoA = mycothiol + CoA + H(+). Its function is as follows. Catalyzes the transfer of acetyl from acetyl-CoA to desacetylmycothiol (Cys-GlcN-Ins) to form mycothiol. The sequence is that of Mycothiol acetyltransferase from Rhodococcus jostii (strain RHA1).